Consider the following 505-residue polypeptide: Probable cytosol aminopeptidase (505 aa).

Mn(2+) is bound by residues K268 and D273. Residue K280 is part of the active site. 3 residues coordinate Mn(2+): D291, D350, and E352. Residue R354 is part of the active site.

It belongs to the peptidase M17 family. It depends on Mn(2+) as a cofactor.

The protein localises to the cytoplasm. The catalysed reaction is Release of an N-terminal amino acid, Xaa-|-Yaa-, in which Xaa is preferably Leu, but may be other amino acids including Pro although not Arg or Lys, and Yaa may be Pro. Amino acid amides and methyl esters are also readily hydrolyzed, but rates on arylamides are exceedingly low.. The enzyme catalyses Release of an N-terminal amino acid, preferentially leucine, but not glutamic or aspartic acids.. In terms of biological role, presumably involved in the processing and regular turnover of intracellular proteins. Catalyzes the removal of unsubstituted N-terminal amino acids from various peptides. This is Probable cytosol aminopeptidase from Syntrophobacter fumaroxidans (strain DSM 10017 / MPOB).